A 484-amino-acid chain; its full sequence is L-amino-acid oxidase (484 aa).

A disulfide bridge links C8 with C171. FAD-binding positions include 41-42, 61-62, and R69; these read MS and EA. Position 73 (H73) interacts with Zn(2+). Position 85–88 (85–88) interacts with FAD; that stretch reads GPMR. R88 is a binding site for substrate. A glycan (N-linked (GlcNAc...) asparagine) is linked at N170. H221 provides a ligand contact to substrate. Position 259 (V259) interacts with FAD. Zn(2+) is bound at residue E277. The cysteines at positions 329 and 410 are disulfide-linked. Y370 contacts substrate. FAD-binding positions include E455 and 462-467; that span reads GWIDST. 462 to 463 lines the substrate pocket; sequence GW.

This sequence belongs to the flavin monoamine oxidase family. FIG1 subfamily. As to quaternary structure, homodimer; non-covalently linked. The cofactor is FAD. Expressed by the venom gland.

It is found in the secreted. It catalyses the reaction an L-alpha-amino acid + O2 + H2O = a 2-oxocarboxylate + H2O2 + NH4(+). Its function is as follows. Catalyzes an oxidative deamination of predominantly hydrophobic and aromatic L-amino acids, thus producing hydrogen peroxide that may contribute to the diverse toxic effects of this enzyme. Exhibits diverse biological activities, such as hemorrhage, hemolysis, edema, apoptosis of vascular endothelial cells or tumor cell lines, antibacterial and antiparasitic activities, as well as regulation of platelet aggregation. Effects of snake L-amino oxidases on platelets are controversial, since they either induce aggregation or inhibit agonist-induced aggregation. These different effects are probably due to different experimental conditions. The protein is L-amino-acid oxidase of Vipera ammodytes ammodytes (Western sand viper).